A 372-amino-acid polypeptide reads, in one-letter code: Protein L-Myc-1a (372 aa).

2 disordered regions span residues 172–226 and 243–306; these read KVAA…ADPF and NYAA…DDLR. A compositionally biased stretch (acidic residues) spans 187-197; that stretch reads SDDDEDDDEID. The span at 269–284 shows a compositional bias: low complexity; that stretch reads ESSSAPSSPLSSPATS. The 53-residue stretch at 289-341 folds into the bHLH domain; that stretch reads STEQRRNFLERKRRDDLRSRFQALREEIPGLSGSSKTSKVAILTQATDYLLQL. A compositionally biased stretch (basic and acidic residues) spans 290 to 306; it reads TEQRRNFLERKRRDDLR. The leucine-zipper stretch occupies residues 341–369; that stretch reads LHSSQRRQAQEKRKLKAKQQQLLRRISAL.

As to quaternary structure, efficient DNA binding requires dimerization with another bHLH protein. Binds DNA as a heterodimer with max. As to expression, uterus.

The protein resides in the nucleus. In Danio rerio (Zebrafish), this protein is Protein L-Myc-1a.